The following is a 179-amino-acid chain: Large ribosomal subunit protein uL6 (179 aa).

This sequence belongs to the universal ribosomal protein uL6 family. Part of the 50S ribosomal subunit.

Its function is as follows. This protein binds to the 23S rRNA, and is important in its secondary structure. It is located near the subunit interface in the base of the L7/L12 stalk, and near the tRNA binding site of the peptidyltransferase center. This Synechococcus sp. (strain CC9311) protein is Large ribosomal subunit protein uL6.